The chain runs to 339 residues: UDP-N-acetylglucosamine--N-acetylmuramyl-(pentapeptide) pyrophosphoryl-undecaprenol N-acetylglucosamine transferase (339 aa).

UDP-N-acetyl-alpha-D-glucosamine contacts are provided by residues 11–13, N127, R170, S188, I235, and Q280; that span reads TGG.

Belongs to the glycosyltransferase 28 family. MurG subfamily.

Its subcellular location is the cell inner membrane. The enzyme catalyses di-trans,octa-cis-undecaprenyl diphospho-N-acetyl-alpha-D-muramoyl-L-alanyl-D-glutamyl-meso-2,6-diaminopimeloyl-D-alanyl-D-alanine + UDP-N-acetyl-alpha-D-glucosamine = di-trans,octa-cis-undecaprenyl diphospho-[N-acetyl-alpha-D-glucosaminyl-(1-&gt;4)]-N-acetyl-alpha-D-muramoyl-L-alanyl-D-glutamyl-meso-2,6-diaminopimeloyl-D-alanyl-D-alanine + UDP + H(+). Its pathway is cell wall biogenesis; peptidoglycan biosynthesis. Cell wall formation. Catalyzes the transfer of a GlcNAc subunit on undecaprenyl-pyrophosphoryl-MurNAc-pentapeptide (lipid intermediate I) to form undecaprenyl-pyrophosphoryl-MurNAc-(pentapeptide)GlcNAc (lipid intermediate II). The sequence is that of UDP-N-acetylglucosamine--N-acetylmuramyl-(pentapeptide) pyrophosphoryl-undecaprenol N-acetylglucosamine transferase from Thermotoga petrophila (strain ATCC BAA-488 / DSM 13995 / JCM 10881 / RKU-1).